The sequence spans 225 residues: ATP-dependent dethiobiotin synthetase BioD (225 aa).

12-17 (GVGKTV) lines the ATP pocket. Residue threonine 16 coordinates Mg(2+). Lysine 37 is a catalytic residue. Threonine 41 lines the substrate pocket. Residues aspartate 46, 105 to 108 (EGAG), 166 to 167 (GS), and 196 to 198 (PEG) contribute to the ATP site. Positions 46 and 105 each coordinate Mg(2+).

It belongs to the dethiobiotin synthetase family. Homodimer. Mg(2+) is required as a cofactor.

The protein localises to the cytoplasm. It carries out the reaction (7R,8S)-7,8-diammoniononanoate + CO2 + ATP = (4R,5S)-dethiobiotin + ADP + phosphate + 3 H(+). It participates in cofactor biosynthesis; biotin biosynthesis; biotin from 7,8-diaminononanoate: step 1/2. Catalyzes a mechanistically unusual reaction, the ATP-dependent insertion of CO2 between the N7 and N8 nitrogen atoms of 7,8-diaminopelargonic acid (DAPA, also called 7,8-diammoniononanoate) to form a ureido ring. This chain is ATP-dependent dethiobiotin synthetase BioD, found in Mycobacteroides abscessus (strain ATCC 19977 / DSM 44196 / CCUG 20993 / CIP 104536 / JCM 13569 / NCTC 13031 / TMC 1543 / L948) (Mycobacterium abscessus).